Reading from the N-terminus, the 138-residue chain is Large ribosomal subunit protein uL16 (138 aa).

Basic residues predominate over residues 1 to 18; it reads MALMPKRVKHRKSQRGRI. The segment at 1-21 is disordered; the sequence is MALMPKRVKHRKSQRGRIKGN.

This sequence belongs to the universal ribosomal protein uL16 family. Part of the 50S ribosomal subunit.

In terms of biological role, binds 23S rRNA and is also seen to make contacts with the A and possibly P site tRNAs. The polypeptide is Large ribosomal subunit protein uL16 (Rhodopirellula baltica (strain DSM 10527 / NCIMB 13988 / SH1)).